A 329-amino-acid chain; its full sequence is Synaptonemal complex central element protein 1 (329 aa).

Residues 1–29 are disordered; sequence MATRPQPLGMEPEGSADLLHGPEGARGQY. 2 coiled-coil regions span residues 54-167 and 194-294; these read RIEV…LETL and KEQL…ILAH. The tract at residues 291 to 329 is disordered; that stretch reads ILAHSTQNEEDSSWRMASPKPVEVHEETAQDQERPSSRT. Residues 312-329 are compositionally biased toward basic and acidic residues; that stretch reads VEVHEETAQDQERPSSRT.

The protein belongs to the SYCE family. As to quaternary structure, homodimer. Found in a complex with SYCP1 and SYCE2. Interacts with SYCP1, SYCE2 and SYCE3. Interacts with SIX6OS1. In terms of tissue distribution, meiotic cells (at protein level). Expressed in the ovary and testis.

It localises to the nucleus. Its subcellular location is the chromosome. Its function is as follows. Major component of the transverse central element of synaptonemal complexes (SCS), formed between homologous chromosomes during meiotic prophase. Requires SYCP1 in order to be incorporated into the central element. May have a role in the synaptonemal complex assembly, stabilization and recombination. The polypeptide is Synaptonemal complex central element protein 1 (Syce1) (Mus musculus (Mouse)).